A 329-amino-acid chain; its full sequence is 4-hydroxythreonine-4-phosphate dehydrogenase (329 aa).

Residues His-136 and Thr-137 each contribute to the substrate site. A divalent metal cation contacts are provided by His-166, His-211, and His-266. Positions 274, 283, and 292 each coordinate substrate.

This sequence belongs to the PdxA family. In terms of assembly, homodimer. The cofactor is Zn(2+). Mg(2+) is required as a cofactor. It depends on Co(2+) as a cofactor.

The protein localises to the cytoplasm. It catalyses the reaction 4-(phosphooxy)-L-threonine + NAD(+) = 3-amino-2-oxopropyl phosphate + CO2 + NADH. It functions in the pathway cofactor biosynthesis; pyridoxine 5'-phosphate biosynthesis; pyridoxine 5'-phosphate from D-erythrose 4-phosphate: step 4/5. Functionally, catalyzes the NAD(P)-dependent oxidation of 4-(phosphooxy)-L-threonine (HTP) into 2-amino-3-oxo-4-(phosphooxy)butyric acid which spontaneously decarboxylates to form 3-amino-2-oxopropyl phosphate (AHAP). In Pseudomonas syringae pv. tomato (strain ATCC BAA-871 / DC3000), this protein is 4-hydroxythreonine-4-phosphate dehydrogenase.